Consider the following 191-residue polypeptide: Phospholipase A2-delta (191 aa).

The first 25 residues, 1–25 (MIRGGALTHVALGLTVFLLLAVVHS), serve as a signal peptide directing secretion. Cystine bridges form between Cys-29–Cys-56, Cys-33–Cys-62, Cys-38–Cys-115, Cys-49–Cys-69, Cys-68–Cys-93, and Cys-75–Cys-86. Ca(2+)-binding residues include Tyr-48, Gly-50, and Tyr-53. His-72 is an active-site residue. A Ca(2+)-binding site is contributed by Asp-73. Positions 161 to 191 (KADTKDGLGTNQGPQTKDGSKVSVPMNPSPS) are disordered.

Belongs to the phospholipase A2 family. Requires Ca(2+) as cofactor. Specifically expressed in flowers but at a low level. Detected specifically in the pollen.

It is found in the secreted. The protein resides in the endoplasmic reticulum. The enzyme catalyses a 1,2-diacyl-sn-glycero-3-phosphocholine + H2O = a 1-acyl-sn-glycero-3-phosphocholine + a fatty acid + H(+). In terms of biological role, PA2 catalyzes the calcium-dependent hydrolysis of the 2-acyl groups in 3-sn-phosphoglycerides. Releases lysophospholipids (LPLs) and free fatty acids (FFAs) from membrane phospholipids in response to hormones and other external stimuli. Plays a role in pollen development and germination and tube growth. The chain is Phospholipase A2-delta (PLA2-DELTA) from Arabidopsis thaliana (Mouse-ear cress).